A 171-amino-acid chain; its full sequence is Acetyltransferase PA2271 (171 aa).

Positions 3–162 constitute an N-acetyltransferase domain; that stretch reads YRIRTSRDED…HEQEIGFAAD (160 aa). CoA contacts are provided by residues 84–86 and 128–130; these read LSI and PFY.

Functionally, catalyzes the transfer of an acetyl group from acetyl coenzyme A (AcCoA) to an acceptor substrate and releases both CoA and the acetylated product. It can use a variety of substrates including spermidine, spermine and N(8)-acetylspermidine, 7-aminocephalosporanic acid, colistin and thiamine. The chain is Acetyltransferase PA2271 from Pseudomonas aeruginosa (strain ATCC 15692 / DSM 22644 / CIP 104116 / JCM 14847 / LMG 12228 / 1C / PRS 101 / PAO1).